The primary structure comprises 310 residues: Urease accessory protein UreD (310 aa).

The protein belongs to the UreD family. As to quaternary structure, ureD, UreF and UreG form a complex that acts as a GTP-hydrolysis-dependent molecular chaperone, activating the urease apoprotein by helping to assemble the nickel containing metallocenter of UreC. The UreE protein probably delivers the nickel.

It localises to the cytoplasm. Required for maturation of urease via the functional incorporation of the urease nickel metallocenter. The polypeptide is Urease accessory protein UreD (Synechococcus sp. (strain RCC307)).